Consider the following 295-residue polypeptide: Small ribosomal subunit protein uS2B (295 aa).

At serine 2 the chain carries N-acetylserine. Positions 54–113 are interaction with PPP1R16B; the sequence is TWEKLLLAARAIVAIENPADVSVISSRNTGQRAVLKFAAATGATPIAGRFTPGTFTNQIQ. Laminin-binding regions lie at residues 161-180 and 205-229; these read IPCNNKGAHSVGLMWWMLAR and RDPEEIEKEEQAAAEKAVTKEEFQG. Residues 218-227 are compositionally biased toward basic and acidic residues; sequence AEKAVTKEEF. The disordered stretch occupies residues 218 to 242; the sequence is AEKAVTKEEFQGEWTAPSPEFTATQ. [DE]-W-[ST] repeat units lie at residues 230 to 232, 247 to 249, 266 to 268, 275 to 277, and 293 to 295; these read EWT and DWS. Residues 242 to 295 form a laminin-binding region; that stretch reads QPEVADWSEGVQVPSVPIQQFPTEDWSAQPATEDWSAAPTAQATEWVGATTDWS. A disordered region spans residues 266 to 295; that stretch reads DWSAQPATEDWSAAPTAQATEWVGATTDWS.

This sequence belongs to the universal ribosomal protein uS2 family. In terms of assembly, monomer (37LRP) and homodimer (67LR). Component of the small ribosomal subunit. Mature ribosomes consist of a small (40S) and a large (60S) subunit. The 40S subunit contains about 33 different proteins and 1 molecule of RNA (18S). The 60S subunit contains about 49 different proteins and 3 molecules of RNA (28S, 5.8S and 5S). Interacts with RPS21. Interacts with several laminins including at least LAMB1. Interacts with MDK. The mature dimeric form interacts with PPP1R16B (via its fourth ankyrin repeat). Interacts with PPP1CA only in the presence of PPP1R16B. Acylated. Acylation may be a prerequisite for conversion of the monomeric 37 kDa laminin receptor precursor (37LRP) to the mature dimeric 67 kDa laminin receptor (67LR), and may provide a mechanism for membrane association. Post-translationally, cleaved by stromelysin-3 (ST3) at the cell surface. Cleavage by stromelysin-3 may be a mechanism to alter cell-extracellular matrix interactions.

The protein resides in the cell membrane. Its subcellular location is the cytoplasm. The protein localises to the nucleus. Required for the assembly and/or stability of the 40S ribosomal subunit. Required for the processing of the 20S rRNA-precursor to mature 18S rRNA in a late step of the maturation of 40S ribosomal subunits. Also functions as a cell surface receptor for laminin. Plays a role in cell adhesion to the basement membrane and in the consequent activation of signaling transduction pathways. May play a role in cell fate determination and tissue morphogenesis. Also acts as a receptor for several other ligands, including the pathogenic prion protein, viruses, and bacteria. Acts as a PPP1R16B-dependent substrate of PPP1CA. In Homo sapiens (Human), this protein is Small ribosomal subunit protein uS2B.